Reading from the N-terminus, the 1227-residue chain is MAAVLESLLREEVSVAAVVRWIARSTQGSEDNAGEAAALSSLRALRKEFVPFLLNFLREQSSRVLPQGPPTPAKTPGASAALPGRPGGPPRGSRGARSQLFPPTEAQSTAAEAPLARRGGRRRGPGPARERGGRGLEEGVSGESLPGAGGRRLRGSGSPSRPSLTLSDPPNLSNLEEFPPVGSVPPGPTGTKPSRRINPTPVSEERSLSKPKTCFTSPPISCVPSSQPSALDTSPWGLGLPPGCRSLQEEREMLRKERSKQLQQSPTPTCPTPELGSPLPSRTGSLTDEPADPARVSSRQRLELVALVYSSCIAENLVPNLFLELFFVFQLLTARRMVTAKDSDPELSPAVLDSLESPLFQSIHDCVFFAVQVLECHFQVLSNLDKGTLKLLAENERLLCFSPALQGRLRAAYEGSVAKVSLVMPPSTQAVSFQPETDNRANFSSDRAFHTFKKQRDVFYEVLREWEDHHEEPGWDFEKGLGSRIRAMMGQLSAACSHSHFVRLFQKQLLQMCQSPGGAGGTVLGEAPDVLSMLGADKLGRLWRLQERLMAPQSSGGPCPPPTFPGCQGFFRDFILSASSFQFNQHLMDSLSLKIQELNGLALPQHEPNDEDGESDVDWQGERKQFAVVLLSLRLLAKFLGFVAFLPYRGPEPPPTGELQDSILALRSQVPPVLDVRTLLQRGLQARRAVLTVPWLVEFLSFADHVVPLLEYYRDIFTLLLRLHRSLVLSQESEGKMCFLNKLLLLAVLGWLFQIPTVPEDLFFLEEGPSYAFEVDTVAPEHGLDNAPVVDQQLLYTCCPYIGELRKLLASWVSGSSGRSGGFMRKITPTTTTSLGAQPSQTSQGLQAQLAQAFFHNQPPSLRRTVEFVAERIGSNCVKHIKATLVADLVRQAESLLQEQLVTQGEEGGDPAQLLEILCSQLCPHGAQALALGREFCQRKSPGAVRALLPEETPAAVLSSAENIAVGLATEKACAWLSANITALIRREVKAAVSRTLRAQGPEPAARGERRGCSRACEHHAPLPSHLISEIKDVLSLAVGPRDPDEGVSPEHLEQLLGQLGQTLRCRQFLCPPAEQHLAKCSVELASLLVADQIPILGPPAQYRLERGQARRLLHMLLSLWKEDFQGPVPLQLLLSPRNVGLLADTRPREWDLLLFLLRELVEKGLMGRMEIEACLGSLHQAQWPGDFAEELATLSNLFLAEPHLPEPQLRACELVQPNRGTVLAQS.

Position 2 is an N-acetylalanine (A2). A disordered region spans residues 63-294; that stretch reads RVLPQGPPTP…SLTDEPADPA (232 aa). Phosphothreonine is present on T71. Residues 128-137 are compositionally biased toward basic and acidic residues; it reads ARERGGRGLE. The span at 155–167 shows a compositional bias: low complexity; sequence GSGSPSRPSLTLS. Residues 188-208 form an interaction with ASF1A/B region; the sequence is PTGTKPSRRINPTPVSEERSL. The span at 214-232 shows a compositional bias: polar residues; it reads CFTSPPISCVPSSQPSALD. The span at 247–260 shows a compositional bias: basic and acidic residues; sequence LQEEREMLRKERSK. Phosphoserine occurs at positions 265 and 285. 2 consecutive transmembrane segments (helical) span residues 312-332 and 626-646; these read CIAENLVPNLFLELFFVFQLL and FAVVLLSLRLLAKFLGFVAFL.

Found in a cytosolic complex with ASF1A, ASF1B, IPO4 and histones H3.1 and H4. As to expression, ubiquitously expressed. Isoform 3 is not found in erythroid cells.

It localises to the cytoplasm. The protein localises to the nucleus. The protein resides in the membrane. May act as a negative regulator of ASF1 in chromatin assembly. This Homo sapiens (Human) protein is Codanin-1 (CDAN1).